Consider the following 528-residue polypeptide: Galactokinase (528 aa).

Positions 53, 59, 60, and 62 each coordinate alpha-D-galactose. ATP-binding residues include G165, G167, S169, and S170. The alpha-D-galactose site is built by N213 and D217. D217 acts as the Proton acceptor in catalysis. ATP is bound by residues S264, N265, and K266. Y274 provides a ligand contact to alpha-D-galactose. S381 is modified (phosphoserine).

The protein belongs to the GHMP kinase family. GalK subfamily.

It catalyses the reaction alpha-D-galactose + ATP = alpha-D-galactose 1-phosphate + ADP + H(+). It functions in the pathway carbohydrate metabolism; galactose metabolism. Functionally, galactokinase is a key enzyme in the galactose metabolism where it catalyzes the conversion of alpha-D-galactose to galactose 1-phosphate. Can also induce the transcription of the yeast GAL genes in response to the organism being challenged with galactose as the sole source of carbon. It's striking amino acid sequence similarity to GAL3 might explain its GAL3-like induction activity. The sequence is that of Galactokinase from Saccharomyces cerevisiae (strain ATCC 204508 / S288c) (Baker's yeast).